We begin with the raw amino-acid sequence, 49 residues long: Large ribosomal subunit protein bL33 (49 aa).

The protein belongs to the bacterial ribosomal protein bL33 family.

The polypeptide is Large ribosomal subunit protein bL33 (Clostridioides difficile (strain 630) (Peptoclostridium difficile)).